We begin with the raw amino-acid sequence, 89 residues long: Acylphosphatase (89 aa).

Positions 3–89 (RKEFLVSGRV…DTREKRFSTY (87 aa)) constitute an Acylphosphatase-like domain. Active-site residues include arginine 18 and asparagine 36.

This sequence belongs to the acylphosphatase family.

It carries out the reaction an acyl phosphate + H2O = a carboxylate + phosphate + H(+). In Clostridium perfringens (strain ATCC 13124 / DSM 756 / JCM 1290 / NCIMB 6125 / NCTC 8237 / Type A), this protein is Acylphosphatase (acyP).